Reading from the N-terminus, the 910-residue chain is Potassium/sodium hyperpolarization-activated cyclic nucleotide-gated channel 1 (910 aa).

The segment at 1 to 75 (MEGGGKPNSA…PAGSFEDAEG (75 aa)) is disordered. Over 1 to 131 (MEGGGKPNSA…WIIHPYSDFR (131 aa)) the chain is Cytoplasmic. A helical membrane pass occupies residues 132-153 (FYWDLIMLIMMVGNLVIIPVGI). The Extracellular segment spans residues 154–162 (TFFTEQTTT). Residues 163–183 (PWIIFNVASDTVFLLDLIMNF) form a helical membrane-spanning segment. At 184-204 (RTGTVNEDSSEIILDPKVIKM) the chain is on the cytoplasmic side. Residues 205–225 (NYLKSWFVVDFISSIPVDYIF) traverse the membrane as a helical segment. Topologically, residues 226–249 (LIVEKGMDSEVYKTARALRIVRFT) are extracellular. The chain crosses the membrane as a helical; Voltage-sensor span at residues 250–270 (KILSLLRLLRLSRLIRYIHQW). The Cytoplasmic segment spans residues 271–284 (EEIFHMTYDLASAV). The helical transmembrane segment at 285 to 307 (VRIFNLIGMMLLLCHWDGCLQFL) threads the bilayer. Residues 308–333 (VPLLQDFPPDCWVSLNEMVNDSWGKQ) lie on the Extracellular side of the membrane. Residue N327 is glycosylated (N-linked (GlcNAc...) asparagine). The pore-forming intramembrane region spans 334 to 355 (YSYALFKAMSHMLCIGYGAQAP). The short motif at 347 to 351 (CIGYG) is the Selectivity filter element. Residues 356-360 (VSMSD) lie on the Extracellular side of the membrane. A helical transmembrane segment spans residues 361–381 (LWITMLSMIVGATCYAMFVGH). Over 382–910 (ATALIQSLDS…AEKPRFASNL (529 aa)) the chain is Cytoplasmic. 3',5'-cyclic AMP is bound by residues G528, E529, C531, R538, T539, R579, and R582. Disordered stretches follow at residues 634 to 681 (TALN…QPSA), 771 to 791 (QQQQQPQTPGSSTPKNEVHKS), and 865 to 910 (QMSS…ASNL). Low complexity predominate over residues 639 to 680 (TSSTTTPTSRMRTQSPPVYTATSLSHSNLHSPSPSTQTPQPS). Polar residues predominate over residues 780–791 (GSSTPKNEVHKS). Over residues 875-885 (RGVPPAPPPPA) the composition is skewed to pro residues. Over residues 900–910 (DAEKPRFASNL) the composition is skewed to basic and acidic residues.

The protein belongs to the potassium channel HCN family. In terms of assembly, homotetramer. Heterotetramer with HCN2. The potassium channel is composed of a homo- or heterotetrameric complex of pore-forming subunits. Interacts with KCNE2. Interacts with the SH3 domain of CSK. N-glycosylated. Predominantly expressed in brain. Highly expressed in apical dendrites of pyramidal neurons in the cortex, in the layer corresponding to the stratum lacunosum-moleculare in the hippocampus and in axons of basket cells in the cerebellum (at protein level). Expressed in a subset of elongated cells in taste buds.

The protein resides in the cell membrane. It catalyses the reaction Na(+)(in) = Na(+)(out). The catalysed reaction is K(+)(in) = K(+)(out). With respect to regulation, activated by cAMP. cAMP binding causes a conformation change that leads to the assembly of an active tetramer and channel opening. Compared to other family members, cAMP has less stimulatory effect on HCN1 because part of the molecules already contain bound cAMP and form homotetramers when cAMP levels are low, this inherent tetramerization in HCN1 results in a weaker response to increased cAMP. In terms of biological role, hyperpolarization-activated ion channel that are permeable to sodium and potassium ions. Exhibits weak selectivity for potassium over sodium ions. Contributes to the native pacemaker currents in heart (If) and in neurons (Ih). Participates in cerebellar mechanisms of motor learning. May mediate responses to sour stimuli. The chain is Potassium/sodium hyperpolarization-activated cyclic nucleotide-gated channel 1 (Hcn1) from Mus musculus (Mouse).